A 262-amino-acid chain; its full sequence is Ubiquitin thioesterase otubain-like (262 aa).

Residues 64–262 (KFIRRTRPDG…PGHYDILYPN (199 aa)) form the OTU domain. Aspartate 72 is a catalytic residue. The active-site Nucleophile is cysteine 75. A substrate-binding site is contributed by isoleucine 168. Residue histidine 255 is part of the active site.

It belongs to the peptidase C65 family.

It catalyses the reaction Thiol-dependent hydrolysis of ester, thioester, amide, peptide and isopeptide bonds formed by the C-terminal Gly of ubiquitin (a 76-residue protein attached to proteins as an intracellular targeting signal).. Possible hydrolase that can remove conjugated ubiquitin from proteins in vitro and may therefore play an important regulatory role at the level of protein turnover by preventing degradation. This chain is Ubiquitin thioesterase otubain-like, found in Drosophila melanogaster (Fruit fly).